A 326-amino-acid polypeptide reads, in one-letter code: Vitamin B12 import system permease protein BtuC (326 aa).

9 consecutive transmembrane segments (helical) span residues 15–35 (WLLCLSVLMLLALLLSLCAGE), 61–81 (LAVLLVGAALAISGAVMQALF), 88–108 (PGLLGVSNGAGVGLIAAVLLG), 112–132 (LPNWALGLCAIAGALIITLIL), 146–166 (LLAGVALGIICSALMTWAIYF), 184–204 (GGVDWRQSWLMLALIPVLLWI), 240–260 (GWMVGVSVALAGAIGFIGLVI), 274–294 (VLLPGCALAGASALLLADIVA), and 302–322 (ELPIGVVTATLGAPVFIWLLL).

Belongs to the binding-protein-dependent transport system permease family. FecCD subfamily. As to quaternary structure, the complex is composed of two ATP-binding proteins (BtuD), two transmembrane proteins (BtuC) and a solute-binding protein (BtuF).

It is found in the cell inner membrane. Part of the ABC transporter complex BtuCDF involved in vitamin B12 import. Involved in the translocation of the substrate across the membrane. The sequence is that of Vitamin B12 import system permease protein BtuC from Escherichia coli O7:K1 (strain IAI39 / ExPEC).